A 180-amino-acid chain; its full sequence is Probable chorismate pyruvate-lyase (180 aa).

Substrate contacts are provided by Arg82, Leu120, and Glu165.

This sequence belongs to the UbiC family.

It localises to the cytoplasm. It carries out the reaction chorismate = 4-hydroxybenzoate + pyruvate. The protein operates within cofactor biosynthesis; ubiquinone biosynthesis. Removes the pyruvyl group from chorismate, with concomitant aromatization of the ring, to provide 4-hydroxybenzoate (4HB) for the ubiquinone pathway. The polypeptide is Probable chorismate pyruvate-lyase (Aliivibrio fischeri (strain ATCC 700601 / ES114) (Vibrio fischeri)).